We begin with the raw amino-acid sequence, 36 residues long: Omega-agatoxin-Aa1b (36 aa).

This sequence belongs to the neurotoxin 04 (omega-agtx) family. 01 (type I omega-agtx) subfamily. In terms of tissue distribution, expressed by the venom gland.

The protein resides in the secreted. In terms of biological role, omega-agatoxin are antagonist of voltage-gated calcium channels. They block insect neuromuscular transmission presynaptically. This toxin is a blocker of L-type calcium channels (Cav/CACNA1). The polypeptide is Omega-agatoxin-Aa1b (Agelenopsis aperta (North American funnel-web spider)).